A 419-amino-acid polypeptide reads, in one-letter code: MLGFFGPLYEQLVGMLRKQQGQLAFDTIDRVNAWFTPFVLVAMTLAISCKQYFGQPIKCWTPREFSGSWDGYVHDFCFIENTYFVPNGTEVTDEARGGRHINYYRWVPLVLLFQAAMFVLPYHLWNLFHKRTTINLKGSLRFFEGALKKLEPAQACESFAGEIWNRLSDIRNSSNKLYGFQATINYFLLKLGFIVNCILQMVLLKHFLDVDDYFWGFFHLWNVEFKGTAEKEDSIFPRIVLCDFKVRNLGQQHQHTVSCIMILNMIIEKLYICFYFWLIFVFVVTTAGMIHFAFQILFRRHSLIPTNLNNKNKMNPTRSHEFIKDYLNFDGCLLLTYVDAQFGAFRTSQVIDGLVHRFTNELDSDSSAVTSLNEDHPERYVAFNTDTIPMDRYARKHHSLIEEVDGPSAPPANEEKKEI.

4 helical membrane-spanning segments follow: residues Ala-33 to Phe-53, Pro-108 to Phe-128, Ile-184 to Leu-204, and Leu-270 to Ile-290.

This sequence belongs to the pannexin family.

It localises to the cell membrane. Its subcellular location is the cell junction. The protein resides in the gap junction. Structural component of the gap junctions. The sequence is that of Innexin-2 (inx-2) from Caenorhabditis elegans.